The primary structure comprises 560 residues: MLSRLSERCSIATGLEQVLRRHVWSAAWLRDAEPAAAASQNIDLSCLMERAGRAAYDVFSNLYTSQQHWLILVGSGNNGGDGYVIARHAREAGKIVTVLCMPHSKPLPAEAASAQHAWKAVGGTETTMNPGAPLQLPADVDLIVDGLLGTGICGPPREQYEDVIRHINGLPVPRVAIDIPSGLNAETGEVAGACVKADHTATFICLKPGLLTGQAKDYVGQLHYRSLGLEDWMTAPERMRAALCRRVALDDVYEYFGIRRSALAHKGRCGKVILVGGDHGFGGATLMSAEACVTVGAGLTRVLTRPEYAAPLLTRCPEAMVTAVETDTGGQLEQQMLAAFEWASTLAVGPGLGTGAYGQAALTAALRHAEVHQDKTLVLDADALNLLAGRLHGKEGGAAAGAGKHLPVLPNSIITPHPGEAARLLACRVADVEKDRLAAARRLAAILGGTCLLKGPGTIVHCHSSAKTAIVDAGNAGMASGGMGDVLTGLLAGLAAQRMHDTFNTTCAGALVHGVAADMVAAEDGRGTRGIRATELIHRVPLIVNASGPSPATRQRSSGP.

Positions 1-241 are NAD(P)H-hydrate epimerase; that stretch reads MLSRLSERCS…WMTAPERMRA (241 aa). In terms of domain architecture, YjeF N-terminal spans 29–235; it reads LRDAEPAAAA…SLGLEDWMTA (207 aa). Positions 77–81 are NADPHX 1; for epimerase activity; that stretch reads NNGGD. Residues Asn-78 and Asp-145 each contribute to the K(+) site. The segment at 149-155 is NADPHX 1; for epimerase activity; it reads GTGICGP. Residues Tyr-160 and Asp-178 each contribute to the (6S)-NADPHX site. Ser-181 is a binding site for K(+). The YjeF C-terminal domain occupies 249–547; sequence LDDVYEYFGI…HRVPLIVNAS (299 aa). The ADP-dependent (S)-NAD(P)H-hydrate dehydratase stretch occupies residues 249–560; that stretch reads LDDVYEYFGI…PATRQRSSGP (312 aa). Residue Gly-351 coordinates (6S)-NADPHX. The segment at 417-423 is NADPHX 2; for dehydratase activity; the sequence is HPGEAAR. ADP-binding positions include 454–458 and 475–484; these read KGPGT and NAGMASGGMG. Asp-485 is a (6S)-NADPHX binding site.

It in the N-terminal section; belongs to the NnrE/AIBP family. In the C-terminal section; belongs to the NnrD/CARKD family. The cofactor is K(+).

The enzyme catalyses (6S)-NADHX + ADP = AMP + phosphate + NADH + H(+). It catalyses the reaction (6S)-NADPHX + ADP = AMP + phosphate + NADPH + H(+). It carries out the reaction (6R)-NADHX = (6S)-NADHX. The catalysed reaction is (6R)-NADPHX = (6S)-NADPHX. Bifunctional enzyme that catalyzes the epimerization of the S- and R-forms of NAD(P)HX and the dehydration of the S-form of NAD(P)HX at the expense of ADP, which is converted to AMP. This allows the repair of both epimers of NAD(P)HX, a damaged form of NAD(P)H that is a result of enzymatic or heat-dependent hydration. This chain is Bifunctional NAD(P)H-hydrate repair enzyme, found in Leishmania infantum.